We begin with the raw amino-acid sequence, 708 residues long: Nicastrin (708 aa).

The signal sequence occupies residues 1–27 (MATTRGGSGPDPGSRGLLLLSFSVVLA). At 28-668 (GLCGGNSVER…IFLIASKELE (641 aa)) the chain is on the lumenal side. Residues Asn44, Asn54, and Asn128 are each glycosylated (N-linked (GlcNAc...) asparagine). Cys49 and Cys61 are oxidised to a cystine. Cys139 and Cys158 form a disulfide bridge. N-linked (GlcNAc...) asparagine glycosylation is found at Asn186 and Asn203. Intrachain disulfides connect Cys194/Cys212 and Cys229/Cys247. 11 N-linked (GlcNAc...) asparagine glycosylation sites follow: Asn263, Asn386, Asn434, Asn463, Asn505, Asn529, Asn561, Asn572, Asn579, Asn593, and Asn611. A disulfide bond links Cys585 and Cys619. A helical transmembrane segment spans residues 669–689 (FITLIVGFSTLVFSLIVTYCI). Over 690 to 708 (NAKADVLFVAPREPGAVSY) the chain is Cytoplasmic.

This sequence belongs to the nicastrin family. In terms of assembly, component of the gamma-secretase complex. The functional gamma-secretase complex is composed of at least four polypeptides: a presenilin homodimer (PSEN1 or PSEN2), nicastrin (NCSTN), APH1 (APH1A or APH1B) and PEN2. Binds to proteolytic processed C-terminal fragments C83 and C99 of the amyloid precursor protein (APP). Interacts with PSEN1 and PSEN2. In terms of processing, N-glycosylated.

It is found in the membrane. The protein localises to the cytoplasmic vesicle membrane. Its subcellular location is the melanosome. Functionally, essential subunit of the gamma-secretase complex, an endoprotease complex that catalyzes the intramembrane cleavage of integral membrane proteins such as Notch receptors and APP (amyloid-beta precursor protein). The gamma-secretase complex plays a role in Notch and Wnt signaling cascades and regulation of downstream processes via its role in processing key regulatory proteins, and by regulating cytosolic CTNNB1 levels. This chain is Nicastrin (Ncstn), found in Mus musculus (Mouse).